The primary structure comprises 406 residues: 11-beta-hydroxysteroid dehydrogenase type 2 (406 aa).

Residue 82 to 111 (TRAVLITGCDSGFGKETAKKLDAMGFTVLA) participates in NAD(+) binding. Substrate is bound at residue S219. Residue Y232 is the Proton acceptor of the active site. The tract at residues 379–406 (GQPGATPAPDTAQDNPNPNPDPSLVGAR) is disordered.

It belongs to the short-chain dehydrogenases/reductases (SDR) family. In terms of assembly, interacts with ligand-free cytoplasmic NR3C2. Highly expressed in the kidney.

The protein localises to the microsome. Its subcellular location is the endoplasmic reticulum. The enzyme catalyses an 11beta-hydroxysteroid + NAD(+) = an 11-oxosteroid + NADH + H(+). The catalysed reaction is corticosterone + NAD(+) = 11-dehydrocorticosterone + NADH + H(+). It carries out the reaction cortisol + NAD(+) = cortisone + NADH + H(+). It catalyses the reaction 11beta,17beta-dihydroxyandrost-4-ene-3-one + NAD(+) = 17beta-hydroxyandrost-4-ene-3,11-dione + NADH + H(+). The enzyme catalyses 11beta-hydroxyandrost-4-ene-3,17-dione + NAD(+) = androst-4-ene-3,11,17-trione + NADH + H(+). It participates in steroid metabolism. Its activity is regulated as follows. Inhibited by carbenoloxone. Catalyzes the conversion of biologically active 11beta-hydroxyglucocorticoids (11beta-hydroxysteroid) such as corticosterone, to inactive 11-ketoglucocorticoids (11-oxosteroid) such as 11-dehydrocorticosterone, in the presence of NAD(+). Functions as a dehydrogenase (oxidase), thereby decreasing the concentration of active glucocorticoids, thus protecting the nonselective mineralocorticoid receptor from occupation by glucocorticoids. Plays an important role in maintaining glucocorticoids balance during preimplantation and protects the fetus from excessive maternal corticosterone exposure. Catalyzes the oxidation of 11beta-hydroxytestosterone (11beta,17beta-dihydroxyandrost-4-ene-3-one) to 11-ketotestosterone (17beta-hydroxyandrost-4-ene-3,11-dione), a major bioactive androgen. Catalyzes the conversion of 11beta-hydroxyandrostenedione (11beta-hydroxyandrost-4-ene-3,17-dione) to 11-ketoandrostenedione (androst-4-ene-3,11,17-trione), which can be further metabolized to 11-ketotestosterone. Converts 7-beta-25-dihydroxycholesterol to 7-oxo-25-hydroxycholesterol in vitro. 7-beta-25-dihydroxycholesterol (not 7-oxo-25-hydroxycholesterol) acts as a ligand for the G-protein-coupled receptor (GPCR) Epstein-Barr virus-induced gene 2 (EBI2) and may thereby regulate immune cell migration. May protect ovulating oocytes and fertilizing spermatozoa from the adverse effects of cortisol. The sequence is that of 11-beta-hydroxysteroid dehydrogenase type 2 (HSD11B2) from Oryctolagus cuniculus (Rabbit).